A 122-amino-acid chain; its full sequence is Large ribosomal subunit protein uL14 (122 aa).

The protein belongs to the universal ribosomal protein uL14 family. In terms of assembly, part of the 50S ribosomal subunit. Forms a cluster with proteins L3 and L19. In the 70S ribosome, L14 and L19 interact and together make contacts with the 16S rRNA in bridges B5 and B8.

Its function is as follows. Binds to 23S rRNA. Forms part of two intersubunit bridges in the 70S ribosome. This Mycoplasma pneumoniae (strain ATCC 29342 / M129 / Subtype 1) (Mycoplasmoides pneumoniae) protein is Large ribosomal subunit protein uL14.